The sequence spans 2360 residues: DNA (cytosine-5-)-methyltransferase DMT5 (2360 aa).

The 460-residue stretch at 48–507 (FTVGTMCSGT…LCILIAERQV (460 aa)) folds into the SAM-dependent MTase C5-type domain. Cysteine 146 is an active-site residue. The Helicase ATP-binding domain maps to 1258-1575 (AEVVNRARGG…CAIADLVNMH (318 aa)). 1271–1278 (HDVGFGKT) is a binding site for ATP. Residues 1451 to 1498 (SRRKDQKSKATARTQRAKKKSKKPRRTAAAAAESDHSAESDSDSAMDD) form a disordered region. Residues 1465 to 1476 (QRAKKKSKKPRR) are compositionally biased toward basic residues. The segment at 2018-2070 (CSVCGSQDNTEMKDLSLFITCGHLLCSGCVAAHEHQHGQAESTTGEVLCPVDS) adopts an RING-type; degenerate zinc-finger fold. The Helicase C-terminal domain maps to 2102–2267 (KVMKILDVIR…RMPLDDLDYK (166 aa)).

This sequence in the N-terminal section; belongs to the class I-like SAM-binding methyltransferase superfamily. C5-methyltransferase family. It in the C-terminal section; belongs to the SNF2/RAD54 helicase family.

The protein resides in the nucleus. It localises to the chromosome. It catalyses the reaction a 2'-deoxycytidine in DNA + S-adenosyl-L-methionine + ATP + H2O = a 5-methyl-2'-deoxycytidine in DNA + S-adenosyl-L-homocysteine + ADP + phosphate + 2 H(+). Its function is as follows. May play a role in cytosine methylation at palindromic 5'-CG-3' and 5'-C[ACT]G-3' sites in DNA. The protein is DNA (cytosine-5-)-methyltransferase DMT5 of Verticillium dahliae (strain VdLs.17 / ATCC MYA-4575 / FGSC 10137) (Verticillium wilt).